A 255-amino-acid chain; its full sequence is TIR domain-containing protein (255 aa).

The TIR domain maps to 9–185 (LSDQVFINFR…DIVKEVKKQL (177 aa)). Glu-83 is an active-site residue. 2 helical membrane passes run 195 to 215 (AIGV…FIAP) and 223 to 243 (FFQT…SWFW). The region spanning 201-255 (LAITINLIFSFFIAPKYLPDQKFFQTPEWFIGTLAVVLASWFWYKNNQNKAPPPS) is the KASH domain.

Forms homomers. Interacts with SUN1, SUN2, SUN3, SUN4 and SUN5.

The protein resides in the nucleus membrane. It carries out the reaction NAD(+) + H2O = ADP-D-ribose + nicotinamide + H(+). In terms of biological role, could play a role in nuclear morphology, specifically nuclear size. This Arabidopsis thaliana (Mouse-ear cress) protein is TIR domain-containing protein.